The sequence spans 201 residues: Probable DNA replication complex GINS protein PSF1 (201 aa).

It belongs to the GINS1/PSF1 family. Component of the GINS complex which is a heterotetramer of gins1, gins2, gins3 and gins4.

The protein localises to the nucleus. The GINS complex plays an essential role in the initiation of DNA replication. The chain is Probable DNA replication complex GINS protein PSF1 from Caenorhabditis briggsae.